A 570-amino-acid chain; its full sequence is Putative ABC transporter ATP-binding protein SAV2684 (570 aa).

2 ABC transporter domains span residues 6 to 247 (ISFK…GIRE) and 304 to 537 (LELN…ASLR). Residues 40–47 (GASGSGKS) and 338–345 (GHNGAGKS) contribute to the ATP site.

The protein belongs to the ABC transporter superfamily.

The protein resides in the cell membrane. Probably part of an ABC transporter complex. Responsible for energy coupling to the transport system. In Staphylococcus aureus (strain Mu50 / ATCC 700699), this protein is Putative ABC transporter ATP-binding protein SAV2684.